The primary structure comprises 604 residues: MANDKGSNWDSALGCSYLLTEAECESDKENEEPGAGVELSVESDRYDSQDEDFLDNASVFQGNHLEVFQALEKKAGEEQLLNLKRKVLGSSENSSGSEASETPAKRQKAGAKRRLFSENEANRVLTPLQVQGGEWRQGFNEDQAISHRLLQLVKSKNATVFKLGLFKSLFLCSFHDLTRLFKNDKTTNQQWVLAVFGIAEVFFEASLELLKKQCSFVQMQKRSHEGGTCAVYLLCFNTAKSRETVRNLMANMLNVREECLLMQPPKIRGLSAALFWFKSSLSPATLKHGALPEWIRAQTTLHDSLATEKFDFGTMVQWAYDHKYAEESKIAYEYALAAGSDSNARAFLATNSQAKHVKDCATMVRHYLRAETQALSMPAYIKTRCKLATGEGSWKSILTFFNYQNIELITFINALKLWLNGIPKKNCLAFIGPPKTGKSMLCNSLIHFLGGSVLSFANHKSHFWLASLADARAALVDDATHACWRYFDTYLRNALDGYPVSIDRKHKAAVQIKAPPLLVTSNIDVQAEERYLYLHSRVQTFRFEQPCTDESGEQPFTITDADWKSFFVRLWGRLDLVDEEEDSEEDGDSMRTFTCSARNTNAVD.

A disordered region spans residues 24–48; that stretch reads CESDKENEEPGAGVELSVESDRYDS. A Nuclear localization signal motif is present at residues 84–86; sequence KRK. A phosphoserine; by host mark is found at serine 90 and serine 94. Residues 90-101 show a composition bias toward low complexity; that stretch reads SSENSSGSEASE. The tract at residues 90 to 112 is disordered; sequence SSENSSGSEASETPAKRQKAGAK. A DNA-binding region region spans residues 141 to 307; it reads EDQAISHRLL…QTTLHDSLAT (167 aa). Residues 406 to 556 enclose the SF3 helicase domain; the sequence is IELITFINAL…CTDESGEQPF (151 aa). 432–439 provides a ligand contact to ATP; sequence GPPKTGKS. A Glycyl lysine isopeptide (Lys-Gly) (interchain with G-Cter in SUMO) cross-link involves residue lysine 513. Residues 581 to 604 form a disordered region; sequence EDSEEDGDSMRTFTCSARNTNAVD. Residues 591-604 show a composition bias toward polar residues; the sequence is RTFTCSARNTNAVD.

This sequence belongs to the papillomaviridae E1 protein family. As to quaternary structure, can form hexamers. Interacts with E2 protein; this interaction increases E1 DNA binding specificity. Interacts with host DNA polymerase subunit POLA2. Interacts with host single stranded DNA-binding protein RPA1. Interacts with host TOP1; this interaction stimulates the enzymatic activity of TOP1. Phosphorylated. Post-translationally, sumoylated.

The protein localises to the host nucleus. It carries out the reaction Couples ATP hydrolysis with the unwinding of duplex DNA by translocating in the 3'-5' direction.. The enzyme catalyses ATP + H2O = ADP + phosphate + H(+). Its function is as follows. ATP-dependent DNA 3'-5' helicase required for initiation of viral DNA replication. It forms a complex with the viral E2 protein. The E1-E2 complex binds to the replication origin which contains binding sites for both proteins. During the initial step, a dimer of E1 interacts with a dimer of protein E2 leading to a complex that binds the viral origin of replication with high specificity. Then, a second dimer of E1 displaces the E2 dimer in an ATP-dependent manner to form the E1 tetramer. Following this, two E1 monomers are added to each half of the site, which results in the formation of two E1 trimers on the viral ori. Subsequently, two hexamers will be created. The double hexamer acts as a bi-directional helicase machinery and unwinds the viral DNA and then recruits the host DNA polymerase to start replication. The protein is Replication protein E1 of Bos taurus (Bovine).